The primary structure comprises 166 residues: Transcriptional repressor NrdR (166 aa).

The segment at 3–34 is a zinc-finger region; it reads CPFCGFSDSRVLDSRPTVEGNSIRRRRECCGC. Residues 49 to 139 form the ATP-cone domain; that stretch reads LIVVKKDGRR…VYREFRDAES (91 aa).

The protein belongs to the NrdR family. Zn(2+) serves as cofactor.

Its function is as follows. Negatively regulates transcription of bacterial ribonucleotide reductase nrd genes and operons by binding to NrdR-boxes. This is Transcriptional repressor NrdR from Pelotomaculum thermopropionicum (strain DSM 13744 / JCM 10971 / SI).